The chain runs to 416 residues: Actin-like protein 9 (416 aa).

The interval 1–40 (MDASRPKSSESQSSLEAPRPGPNPSPNVVNKPLQRDSPGM) is disordered.

This sequence belongs to the actin family. As to quaternary structure, interacts with ACTL7A. Testis-specific.

It is found in the cytoplasmic vesicle. The protein localises to the secretory vesicle. It localises to the acrosome. The protein resides in the cytoplasm. Its subcellular location is the cytoskeleton. It is found in the perinuclear theca. Its function is as follows. Testis-specic protein that plays an important role in fusion of proacrosomal vesicles and perinuclear theca formation. This is Actin-like protein 9 from Homo sapiens (Human).